Consider the following 261-residue polypeptide: MRPRAPGPLWPLPWGALAWAVGFVGSLGSGDPAPGGVCWLQQGREATCSLVLKTDVSQAECCASGNIDTAWSNFTHPGNKISLLGFLGLVHCLPCKDSCEGVECGPGKACRMLGGRPRCECAPDCTGLPARLQVCGSDGATYRDECELRAARCRGHPDLRVMYRGRCRKSCAHVVCLRPQSCVVDQTGSAHCVVCRAAPCPAPSSPGQELCGNNNVTYLSSCHLRQATCFLGRSIGVRHPGSCAGTPEPLDPESEEEENFV.

Residues 1–26 form the signal peptide; that stretch reads MRPRAPGPLWPLPWGALAWAVGFVGS. In terms of domain architecture, TB spans 36-107; it reads GVCWLQQGRE…SCEGVECGPG (72 aa). Cystine bridges form between C38–C61, C48–C92, C62–C95, C99–C110, C104–C119, C121–C153, C125–C146, and C135–C167. N-linked (GlcNAc...) asparagine glycosylation is present at N73. One can recognise a Follistatin-like 1 domain in the interval 99-119; sequence CEGVECGPGKACRMLGGRPRC. 2 consecutive Kazal-like domains span residues 113–169 and 189–245; these read LGGR…RCRK and SAHC…SCAG. The Follistatin-like 2 domain maps to 170 to 193; it reads SCAHVVCLRPQSCVVDQTGSAHCV. 3 cysteine pairs are disulfide-bonded: C195/C229, C200/C222, and C211/C243. N-linked (GlcNAc...) asparagine glycosylation is present at N215. A disordered region spans residues 242–261; that stretch reads SCAGTPEPLDPESEEEENFV. A compositionally biased stretch (acidic residues) spans 250–261; sequence LDPESEEEENFV.

As to quaternary structure, interacts with INHBA and INHBB. Interacts with FN1. Interacts with ADAM12. Interacts with MLLT10; the interaction enhances MLLT10 in vitro transcriptional activity and self-association. Interacts with MSTN.

Its subcellular location is the secreted. The protein resides in the nucleus. The secreted form is a binding and antagonizing protein for members of the TGF-beta family, such as activin, BMP2 and MSTN. Inhibits activin A-, activin B-, BMP2- and MSDT-induced cellular signaling; more effective on activin A than on activin B. Involved in bone formation; inhibits osteoclast differentiation. Involved in hematopoiesis; involved in differentiation of hemopoietic progenitor cells, increases hematopoietic cell adhesion to fibronectin and seems to contribute to the adhesion of hematopoietic precursor cells to the bone marrow stroma. The nuclear form is probably involved in transcriptional regulation via interaction with MLLT10. This is Follistatin-related protein 3 (FSTL3) from Bos taurus (Bovine).